Reading from the N-terminus, the 195-residue chain is 3-isopropylmalate dehydratase small subunit (195 aa).

It belongs to the LeuD family. LeuD type 1 subfamily. In terms of assembly, heterodimer of LeuC and LeuD.

It catalyses the reaction (2R,3S)-3-isopropylmalate = (2S)-2-isopropylmalate. It participates in amino-acid biosynthesis; L-leucine biosynthesis; L-leucine from 3-methyl-2-oxobutanoate: step 2/4. Functionally, catalyzes the isomerization between 2-isopropylmalate and 3-isopropylmalate, via the formation of 2-isopropylmaleate. This is 3-isopropylmalate dehydratase small subunit from Karelsulcia muelleri (strain GWSS) (Sulcia muelleri).